Reading from the N-terminus, the 90-residue chain is Small ribosomal subunit protein bS18 (90 aa).

The disordered stretch occupies residues 1 to 24 (MKPMRQKPGRGQGNKSISNALASK).

The protein belongs to the bacterial ribosomal protein bS18 family. Part of the 30S ribosomal subunit. Forms a tight heterodimer with protein bS6.

Functionally, binds as a heterodimer with protein bS6 to the central domain of the 16S rRNA, where it helps stabilize the platform of the 30S subunit. The polypeptide is Small ribosomal subunit protein bS18 (Chlorobium phaeovibrioides (strain DSM 265 / 1930) (Prosthecochloris vibrioformis (strain DSM 265))).